We begin with the raw amino-acid sequence, 651 residues long: Mediator of RNA polymerase II transcription subunit 17 (651 aa).

The tract at residues 51-83 (QGSGSEEEEAAGTEGDAQEWPGAGSSADQDDEE) is disordered.

The protein belongs to the Mediator complex subunit 17 family. Interacts with GATA1 and PPARG. Component of the Mediator complex, which is composed of MED1, MED4, MED6, MED7, MED8, MED9, MED10, MED11, MED12, MED13, MED13L, MED14, MED15, MED16, MED17, MED18, MED19, MED20, MED21, MED22, MED23, MED24, MED25, MED26, MED27, MED29, MED30, MED31, CCNC, CDK8 and CDC2L6/CDK11. The MED12, MED13, CCNC and CDK8 subunits form a distinct module termed the CDK8 module. Mediator containing the CDK8 module is less active than Mediator lacking this module in supporting transcriptional activation. Individual preparations of the Mediator complex lacking one or more distinct subunits have been variously termed ARC, CRSP, DRIP, PC2, SMCC and TRAP. Interacts with STAT2. As to expression, ubiquitous.

The protein localises to the nucleus. Functionally, component of the Mediator complex, a coactivator involved in the regulated transcription of nearly all RNA polymerase II-dependent genes. Mediator functions as a bridge to convey information from gene-specific regulatory proteins to the basal RNA polymerase II transcription machinery. Mediator is recruited to promoters by direct interactions with regulatory proteins and serves as a scaffold for the assembly of a functional preinitiation complex with RNA polymerase II and the general transcription factors. The protein is Mediator of RNA polymerase II transcription subunit 17 (MED17) of Homo sapiens (Human).